The chain runs to 146 residues: Angiogenin (146 aa).

Positions 1-24 are cleaved as a signal peptide; sequence MVMGLGLFLLVFMLGLGLTPPTLA. Pyrrolidone carboxylic acid is present on Q25. H37 acts as the Proton acceptor in catalysis. R45 is a binding site for tRNA. Disulfide bonds link C50–C105, C63–C116, and C81–C131. Positions 55–59 match the Nucleolar localization signal motif; the sequence is RRRHL. C105 and I127 together coordinate tRNA. Catalysis depends on H138, which acts as the Proton donor.

This sequence belongs to the pancreatic ribonuclease family. In terms of assembly, homodimer. Interacts with RNH1; inhibiting ANG ribonuclease activity. Interacts with PCNA.

It is found in the secreted. Its subcellular location is the nucleus. The protein resides in the nucleolus. The protein localises to the cytoplasm. It localises to the stress granule. With respect to regulation, has weak tRNA ribonuclease activity by itself due to partial autoinhibition by its C-terminus, which folds into a short alpha-helix that partially occludes the substrate-binding site. In absence of stress, the ribonuclease activity is inhibited by RNH1 in the cytoplasm. In response to stress, dissociates from RNH1 in the cytoplasm and associates with cytoplasmic ribosomes with vacant A-sites: ribosomes directly activate the tRNA ribonuclease activity of ANG by refolding the C-terminal alpha-helix. In response to stress, the angiogenic activity of ANG is inhibited by RNH1 in the nucleus. Functionally, secreted ribonuclease that can either promote or restrict cell proliferation of target cells, depending on the context. Endocytosed in target cells via its receptor PLXNB2 and translocates to the cytoplasm or nucleus. Under stress conditions, localizes to the cytoplasm and promotes the assembly of stress granules (SGs): specifically cleaves a subset of tRNAs within anticodon loops to produce tRNA-derived stress-induced fragments (tiRNAs), resulting in translation repression and inhibition of cell proliferation. tiRNas also prevent formation of apoptosome, thereby promoting cell survival. Preferentially cleaves RNAs between a pyrimidine and an adenosine residue, suggesting that it cleaves the anticodon loop of tRNA(Ala) (32-UUAGCAU-38) after positions 33 and 36. Cleaves a subset of tRNAs, including tRNA(Ala), tRNA(Glu), tRNA(Gly), tRNA(Lys), tRNA(Val), tRNA(His), tRNA(Asp) and tRNA(Sec). Under growth conditions and in differentiated cells, translocates to the nucleus and stimulates ribosomal RNA (rRNA) transcription, including that containing the initiation site sequences of 45S rRNA, thereby promoting cell growth and proliferation. Angiogenin induces vascularization of normal and malignant tissues via its ability to promote rRNA transcription. Involved in hematopoietic stem and progenitor cell (HSPC) growth and survival by promoting rRNA transcription in growth conditions and inhibiting translation in response to stress, respectively. Mediates the crosstalk between myeloid and intestinal epithelial cells to protect the intestinal epithelial barrier integrity: secreted by myeloid cells and promotes intestinal epithelial cells proliferation and survival. Also mediates osteoclast-endothelial cell crosstalk in growing bone: produced by osteoclasts and protects the neighboring vascular cells against senescence by promoting rRNA transcription. In Chlorocebus aethiops (Green monkey), this protein is Angiogenin (ANG).